A 279-amino-acid chain; its full sequence is Vomeronasal type-1 receptor A8 (279 aa).

Topologically, residues 1–19 are extracellular; sequence MNKDHTLYCSVYIRNAFFS. The helical transmembrane segment at 20–40 threads the bilayer; sequence EIGIGISANSCLLLFHTFMFI. At 41–49 the chain is on the cytoplasmic side; sequence RGHRPRLTD. A helical membrane pass occupies residues 50–70; sequence LPIGFVALIHLVMLLLAAYIT. The Extracellular segment spans residues 71–93; that stretch reads EDFFMSSGGWDDITCKLVIFLHR. An intrachain disulfide couples Cys-85 to Cys-172. Residues 94–114 form a helical membrane-spanning segment; it reads FFRSLSVCATCLLSVFQAIIL. Over 115–134 the chain is Cytoplasmic; the sequence is CPQSSHLAKLKQNSPHQLSY. The chain crosses the membrane as a helical span at residues 135 to 155; sequence FFIFLSIFYTSISSQILIAAI. The Extracellular segment spans residues 156–159; it reads PTQN. Asn-159 carries N-linked (GlcNAc...) asparagine glycosylation. Residues 160–180 traverse the membrane as a helical segment; the sequence is ITFVNLIYITNSCSFLPLSSS. The Cytoplasmic portion of the chain corresponds to 181–187; it reads MQHTFST. Residues 188-208 form a helical membrane-spanning segment; the sequence is LLTFRNVFVIGLMGLSTCYMA. Over 209-238 the chain is Extracellular; the sequence is TLLCRHKTRSQRLQNSKLSPKATPEQRALR. A helical transmembrane segment spans residues 239 to 259; it reads TILMLMSFFLLMSTFDSIISY. Topologically, residues 260 to 279 are cytoplasmic; the sequence is SRTIITGKSTALLCPDSCRS.

It belongs to the G-protein coupled receptor 1 family. Expressed in a subset of sensory neurons located in the apical layer of the vomeronasal organ.

The protein resides in the cell membrane. Putative pheromone receptor implicated in the regulation of social and reproductive behavior. This chain is Vomeronasal type-1 receptor A8, found in Mus musculus (Mouse).